Consider the following 425-residue polypeptide: MTQDGSAPANSAEHPWPVRSVSVKVMQWIDRLGSIWVEGQITQINLRPGARTAFLVLRDPSADMSLQVTCDPELIRRSPVPLQEGSRVVVYGKLVFFPARGSISLRVLEIRPVGVGELLARIERLKALLAAEGLFDERLKRPIPFLPKVVGLITGRGGAAEHDVLTVARNRWPAVRFEVRNTAVQGPTAVPQILTALAELDRHPEVEVIVLARGGGSVEDLLPFSDEALCRAIVAATTPIVSAIGHEPDNPLSDYVADLRAATPTDAAKRVVPDAAAELALVRELRARSAAALRGWVDREARALAQLRSRPVLADPLREIDRRATEIERLRADARRCVRHLIRTESTATAHLREKLTAVGPAATLARGYAVVQRVTGPERHVVRSIADSPAGSQLRIRVADGAVSAAALGTTAAGTRIADDTGGN.

Belongs to the XseA family. In terms of assembly, heterooligomer composed of large and small subunits.

The protein localises to the cytoplasm. The catalysed reaction is Exonucleolytic cleavage in either 5'- to 3'- or 3'- to 5'-direction to yield nucleoside 5'-phosphates.. In terms of biological role, bidirectionally degrades single-stranded DNA into large acid-insoluble oligonucleotides, which are then degraded further into small acid-soluble oligonucleotides. This chain is Exodeoxyribonuclease 7 large subunit, found in Nocardia farcinica (strain IFM 10152).